A 319-amino-acid chain; its full sequence is Cobalamin biosynthesis protein CbiB (319 aa).

5 consecutive transmembrane segments (helical) span residues 52–74, 79–101, 155–177, 207–229, and 296–318; these read IGGG…GVLA, IHPW…GRSL, GIIA…YKAV, YLPA…LSGW, and LMWV…LSGV.

It belongs to the CobD/CbiB family.

It localises to the cell membrane. It functions in the pathway cofactor biosynthesis; adenosylcobalamin biosynthesis; adenosylcobalamin from cob(II)yrinate a,c-diamide: step 4/7. In terms of biological role, converts cobyric acid to cobinamide by the addition of aminopropanol on the F carboxylic group. However, the true cosubstrate could be (R)-1-amino-2-propanol O-2-phosphate, leading to cobinamide phosphate. This is Cobalamin biosynthesis protein CbiB from Salmonella typhi.